The chain runs to 575 residues: Suppressor of tumorigenicity 7 protein-like (575 aa).

The next 2 helical transmembrane spans lie at 36–56 (GLAG…LYAL) and 80–100 (FYVA…IFEW). Positions 125–147 (GTESSISEPGSPSRNRENETSRQ) are disordered. The span at 126-137 (TESSISEPGSPS) shows a compositional bias: polar residues.

This sequence belongs to the ST7 family.

It is found in the membrane. The polypeptide is Suppressor of tumorigenicity 7 protein-like (ST7L) (Homo sapiens (Human)).